Here is a 457-residue protein sequence, read N- to C-terminus: Dihydrolipoyl dehydrogenase (457 aa).

Residues 32-40 (EKEYFGGVC), Lys-49, and Ala-113 contribute to the FAD site. Cys-40 and Cys-45 are joined by a disulfide. NAD(+) is bound by residues 178–182 (GGGVI), Val-235, and 262–265 (SIGR). Residues Asp-303 and Ala-311 each coordinate FAD. Residue His-437 is the Proton acceptor of the active site.

The protein belongs to the class-I pyridine nucleotide-disulfide oxidoreductase family. Homodimer. It depends on FAD as a cofactor.

The protein resides in the cytoplasm. The enzyme catalyses N(6)-[(R)-dihydrolipoyl]-L-lysyl-[protein] + NAD(+) = N(6)-[(R)-lipoyl]-L-lysyl-[protein] + NADH + H(+). Its function is as follows. Lipoamide dehydrogenase is a component of the alpha-ketoacid dehydrogenase complexes. This is Dihydrolipoyl dehydrogenase (pdhD) from Mycoplasma pneumoniae (strain ATCC 29342 / M129 / Subtype 1) (Mycoplasmoides pneumoniae).